The primary structure comprises 146 residues: Hemoglobin subunit beta (146 aa).

Valine 1 carries the N-acetylvaline modification. In terms of domain architecture, Globin spans 2-146 (HLTGEEKSAV…VANALAHKYH (145 aa)). The residue at position 12 (threonine 12) is a Phosphothreonine. Serine 44 carries the phosphoserine modification. Residue lysine 59 is modified to N6-acetyllysine. Histidine 63 lines the heme b pocket. Residue lysine 82 is modified to N6-acetyllysine. Residue histidine 92 coordinates heme b. At cysteine 93 the chain carries S-nitrosocysteine. Lysine 144 carries the N6-acetyllysine modification.

The protein belongs to the globin family. In terms of assembly, heterotetramer of two alpha chains and two beta chains. In terms of tissue distribution, red blood cells.

In terms of biological role, involved in oxygen transport from the lung to the various peripheral tissues. The polypeptide is Hemoglobin subunit beta (HBB) (Leontocebus fuscicollis (Brown-mantled tamarin)).